Here is a 173-residue protein sequence, read N- to C-terminus: Dual-action ribosomal maturation protein DarP (173 aa).

This sequence belongs to the DarP family.

The protein resides in the cytoplasm. Member of a network of 50S ribosomal subunit biogenesis factors which assembles along the 30S-50S interface, preventing incorrect 23S rRNA structures from forming. Promotes peptidyl transferase center (PTC) maturation. This Pseudomonas syringae pv. tomato (strain ATCC BAA-871 / DC3000) protein is Dual-action ribosomal maturation protein DarP.